The sequence spans 401 residues: Lipid-A-disaccharide synthase (401 aa).

This sequence belongs to the LpxB family.

It catalyses the reaction a lipid X + a UDP-2-N,3-O-bis[(3R)-3-hydroxyacyl]-alpha-D-glucosamine = a lipid A disaccharide + UDP + H(+). It participates in bacterial outer membrane biogenesis; LPS lipid A biosynthesis. Functionally, condensation of UDP-2,3-diacylglucosamine and 2,3-diacylglucosamine-1-phosphate to form lipid A disaccharide, a precursor of lipid A, a phosphorylated glycolipid that anchors the lipopolysaccharide to the outer membrane of the cell. This is Lipid-A-disaccharide synthase from Rhodospirillum centenum (strain ATCC 51521 / SW).